The chain runs to 646 residues: RNase E specificity factor CsrD (646 aa).

Helical transmembrane passes span 10 to 30 (FVTL…SLSF) and 135 to 155 (MTTA…FLAV). Residues 152–219 (FLAVRWLQRQ…REQHSRLDTL (68 aa)) form an HAMP-like region. A coiled-coil region spans residues 194-224 (RTSSALDTLLREIQNAREQHSRLDTLIRSYA). Positions 254–387 (THGIVMMIRL…GGNSWAIYDD (134 aa)) constitute a GGDEF domain. Residues 396–644 (NVRWRTLIEQ…TNVKKYSQRY (249 aa)) enclose the EAL domain.

The protein resides in the cell membrane. Serves as a specificity factor required for RNase E-mediated decay of the small global regulatory RNAs CsrB and CsrC, it is probably not a nuclease. Nor does its activity involve c-di-GMP, despite its domain composition. Positively modulates motility gene expression, is also required for curli expression. In Escherichia coli (strain K12), this protein is RNase E specificity factor CsrD (csrD).